Consider the following 448-residue polypeptide: Tubby-like F-box protein 3 (448 aa).

One can recognise an F-box domain in the interval 56 to 102 (ESRWASLPPELLREVIRRLEADESTWPSRRNVVCFAAVCRTWREMCK). Pro residues predominate over residues 387-403 (PSPPPAGAPTPSQPGPA). A disordered region spans residues 387 to 406 (PSPPPAGAPTPSQPGPADPE).

Belongs to the TUB family. Expressed in roots, leaves, flowers and seeds.

In Oryza sativa subsp. japonica (Rice), this protein is Tubby-like F-box protein 3 (TULP3).